The primary structure comprises 281 residues: UPF0273 protein PAE3143 (281 aa).

Residues 4–248 form the KaiC domain; it reads PRVRSYVPGL…YIKITGSSVR (245 aa). 31–38 lines the ATP pocket; sequence GGPGTGKS.

This sequence belongs to the UPF0273 family.

This chain is UPF0273 protein PAE3143, found in Pyrobaculum aerophilum (strain ATCC 51768 / DSM 7523 / JCM 9630 / CIP 104966 / NBRC 100827 / IM2).